The following is a 204-amino-acid chain: Oxidoreductase iacF (204 aa).

This sequence belongs to the oxidoreductase OpS7 family.

It functions in the pathway secondary metabolite biosynthesis. Its function is as follows. Oxidoreductase; part of the gene cluster that mediates the biosynthesis of iso-A82775C, a enylepoxycyclohexane and biosynthetic precursor of the chloropestolide anticancer natural products. Within the cluster, the prenyltransferase iacE prenylates siccayne to generate pestalodiol E, using dimethylallyl diphosphate (DMAPP) as cosubstrate. The probable oxidoreductase iacF is then involved in the epoxidation of pestalodiol F to pestalodiol F, which is further converted to pestalofone A by the short-chain dehydrogenase/reductase iacG. Iso-A82775C is subsequently generated from pestalofone A by the short-chain dehydrogenase/reductase iacC. Iso-A82775C is further condensed with maldoxin via a Diels-Alder reaction to produce the anticancer natural products chloropestolides A to E. This is Oxidoreductase iacF from Pestalotiopsis fici (strain W106-1 / CGMCC3.15140).